A 66-amino-acid polypeptide reads, in one-letter code: Large ribosomal subunit protein bL31 (66 aa).

Zn(2+) is bound by residues Cys-16, Cys-18, Cys-36, and Cys-39.

The protein belongs to the bacterial ribosomal protein bL31 family. Type A subfamily. Part of the 50S ribosomal subunit. Zn(2+) serves as cofactor.

Functionally, binds the 23S rRNA. This chain is Large ribosomal subunit protein bL31, found in Trichlorobacter lovleyi (strain ATCC BAA-1151 / DSM 17278 / SZ) (Geobacter lovleyi).